A 424-amino-acid chain; its full sequence is CinA-like protein (424 aa).

This sequence belongs to the CinA family.

The protein is CinA-like protein of Syntrophobacter fumaroxidans (strain DSM 10017 / MPOB).